Here is a 198-residue protein sequence, read N- to C-terminus: Ribosome maturation factor RimP (198 aa).

Belongs to the RimP family.

It is found in the cytoplasm. Functionally, required for maturation of 30S ribosomal subunits. The polypeptide is Ribosome maturation factor RimP (Rhizobium etli (strain CIAT 652)).